A 457-amino-acid polypeptide reads, in one-letter code: 5' exonuclease Apollo (457 aa).

Residues 425–437 carry the TBM motif; sequence ELPKQYLLTPLNA.

This sequence belongs to the DNA repair metallo-beta-lactamase (DRMBL) family. Interacts with TERF2; the interaction is direct.

It localises to the chromosome. The protein resides in the telomere. Its subcellular location is the nucleus. The enzyme catalyses a beta-lactam + H2O = a substituted beta-amino acid. In terms of biological role, 5'-3' exonuclease that plays a central role in telomere maintenance and protection during S-phase. Participates in the protection of telomeres against non-homologous end-joining (NHEJ)-mediated repair, thereby ensuring that telomeres do not fuse. Plays a key role in telomeric loop (T loop) formation by being recruited by TERF2 at the leading end telomeres and by processing leading-end telomeres immediately after their replication via its exonuclease activity: generates 3' single-stranded overhang at the leading end telomeres avoiding blunt leading-end telomeres that are vulnerable to end-joining reactions and expose the telomere end in a manner that activates the DNA repair pathways. May be required for DNA interstrand cross-link repair. Possesses beta-lactamase activity, catalyzing the hydrolysis of penicillin G and nitrocefin. Exhibits no activity towards other beta-lactam antibiotic classes including cephalosporins (cefotaxime) and carbapenems (imipenem). The polypeptide is 5' exonuclease Apollo (DCLRE1B) (Gallus gallus (Chicken)).